The primary structure comprises 526 residues: UDP-glycosyltransferase UGT5 (526 aa).

Topologically, residues 1-474 (MIFFYFLTLT…TAAVDMPWYQ (474 aa)) are lumenal. N-linked (GlcNAc...) asparagine glycosylation is found at N49, N124, and N283. Residues 475-495 (YLLLDVIAFLIFILVSVILII) form a helical membrane-spanning segment. The Cytoplasmic segment spans residues 496-526 (YYGVKISLRYLCALIFGNSSSLKPTKKVKDN).

It belongs to the UDP-glycosyltransferase family.

The protein resides in the microsome membrane. In terms of biological role, catalyzes the transfer of a glycosyl group from a UDP-sugar to an acceptor molecule. The protein is UDP-glycosyltransferase UGT5 of Dactylopius coccus (Cochineal).